We begin with the raw amino-acid sequence, 390 residues long: GTPase Obg (390 aa).

Residues 1-159 enclose the Obg domain; that stretch reads MKFVDEAVVK…REIRLELLLL (159 aa). The region spanning 160-333 is the OBG-type G domain; the sequence is ADVGMLGLPN…LCYKLADFME (174 aa). Residues 166–173, 191–195, 213–216, 283–286, and 314–316 each bind GTP; these read GLPNAGKS, FTTLI, DIPG, NKVD, and SAI. Residues Ser173 and Thr193 each coordinate Mg(2+). Residues 367-382 are compositionally biased toward acidic residues; sequence TEDDDDWDDWDDEEDD. The disordered stretch occupies residues 367 to 390; the sequence is TEDDDDWDDWDDEEDDGHVVYVRD.

This sequence belongs to the TRAFAC class OBG-HflX-like GTPase superfamily. OBG GTPase family. Monomer. It depends on Mg(2+) as a cofactor.

The protein resides in the cytoplasm. Functionally, an essential GTPase which binds GTP, GDP and possibly (p)ppGpp with moderate affinity, with high nucleotide exchange rates and a fairly low GTP hydrolysis rate. Plays a role in control of the cell cycle, stress response, ribosome biogenesis and in those bacteria that undergo differentiation, in morphogenesis control. The chain is GTPase Obg from Vibrio parahaemolyticus serotype O3:K6 (strain RIMD 2210633).